Consider the following 345-residue polypeptide: uncharacterized protein (345 aa).

Belongs to the cycloisomerase 2 family.

This is an uncharacterized protein from Staphylococcus saprophyticus subsp. saprophyticus (strain ATCC 15305 / DSM 20229 / NCIMB 8711 / NCTC 7292 / S-41).